A 435-amino-acid chain; its full sequence is GTPase Der (435 aa).

2 EngA-type G domains span residues 4–167 (PVVA…PAEK) and 175–350 (ISFS…DNQN). GTP is bound by residues 10-17 (GQPNVGKS), 57-61 (DTGGI), 119-122 (NKAD), 181-188 (GRPNVGKS), 228-232 (DTAGI), and 293-296 (NKWD). The KH-like domain maps to 351 to 435 (QRIQSSVLND…PIKILPRKRK (85 aa)).

It belongs to the TRAFAC class TrmE-Era-EngA-EngB-Septin-like GTPase superfamily. EngA (Der) GTPase family. As to quaternary structure, associates with the 50S ribosomal subunit.

Functionally, GTPase that plays an essential role in the late steps of ribosome biogenesis. The sequence is that of GTPase Der from Lactobacillus helveticus (strain DPC 4571).